Reading from the N-terminus, the 400-residue chain is Enoyl-[acyl-carrier-protein] reductase [NADH] 2 (400 aa).

Residues 48-53 (GASSGF), 75-76 (FE), 112-113 (DA), and 141-142 (LA) contribute to the NAD(+) site. Tyr-228 contributes to the substrate binding site. The Proton donor role is filled by Tyr-238. Residues Lys-247 and 276 to 278 (LVT) contribute to the NAD(+) site.

The protein belongs to the TER reductase family. As to quaternary structure, monomer.

It carries out the reaction a 2,3-saturated acyl-[ACP] + NAD(+) = a (2E)-enoyl-[ACP] + NADH + H(+). Its pathway is lipid metabolism; fatty acid biosynthesis. Involved in the final reduction of the elongation cycle of fatty acid synthesis (FAS II). Catalyzes the reduction of a carbon-carbon double bond in an enoyl moiety that is covalently linked to an acyl carrier protein (ACP). This is Enoyl-[acyl-carrier-protein] reductase [NADH] 2 from Vibrio vulnificus (strain CMCP6).